The sequence spans 729 residues: Sodium-dependent neutral amino acid transporter B(0)AT2 (729 aa).

At 1 to 69 (MPKNSKVVKR…ARPAWNSKLQ (69 aa)) the chain is on the cytoplasmic side. Residues serine 25 and serine 55 each carry the phosphoserine modification. The next 3 membrane-spanning stretches (helical) occupy residues 70-90 (YILA…FPYL), 98-117 (AYLL…LFFL), and 142-162 (GIGF…NVII). The Extracellular portion of the chain corresponds to 163–225 (GWSLFYFSQS…TSISESGGLN (63 aa)). N-linked (GlcNAc...) asparagine glycans are attached at residues asparagine 187 and asparagine 213. 4 consecutive transmembrane segments (helical) span residues 226–244 (WKMT…LAMI), 253–270 (IMYF…CFLI), 306–323 (VFFA…FSSY), and 335–356 (VLVS…FAVL). Residues 357–452 (GFKANVINEK…FIAFTEAMTH (96 aa)) lie on the Extracellular side of the membrane. Asparagine 383 and asparagine 394 each carry an N-linked (GlcNAc...) asparagine glycan. The next 5 membrane-spanning stretches (helical) occupy residues 453–472 (FPAS…NLGL), 496–514 (ILTV…IFVQ), 530–550 (TLPL…VYGI), 571–592 (YMWK…IVNM), and 620–642 (VICI…IRRC). Topologically, residues 643–729 (NLIDDSSGNL…DMPDMPESDL (87 aa)) are cytoplasmic. 3 positions are modified to phosphoserine: serine 687, serine 699, and serine 701.

This sequence belongs to the sodium:neurotransmitter symporter (SNF) (TC 2.A.22) family. SLC6A15 subfamily.

Its subcellular location is the membrane. It carries out the reaction L-leucine(in) + Na(+)(in) = L-leucine(out) + Na(+)(out). The catalysed reaction is L-isoleucine(in) + Na(+)(in) = L-isoleucine(out) + Na(+)(out). The enzyme catalyses L-methionine(in) + Na(+)(in) = L-methionine(out) + Na(+)(out). It catalyses the reaction L-proline(in) + Na(+)(in) = L-proline(out) + Na(+)(out). It carries out the reaction L-alanine(in) + Na(+)(in) = L-alanine(out) + Na(+)(out). The catalysed reaction is L-asparagine(in) + Na(+)(in) = L-asparagine(out) + Na(+)(out). The enzyme catalyses L-valine(in) + Na(+)(in) = L-valine(out) + Na(+)(out). It catalyses the reaction L-cysteine(in) + Na(+)(in) = L-cysteine(out) + Na(+)(out). It carries out the reaction L-glutamine(in) + Na(+)(in) = L-glutamine(out) + Na(+)(out). The catalysed reaction is L-serine(in) + Na(+)(in) = L-serine(out) + Na(+)(out). The enzyme catalyses L-threonine(in) + Na(+)(in) = L-threonine(out) + Na(+)(out). It catalyses the reaction L-pipecolate(in) + Na(+)(in) = L-pipecolate(out) + Na(+)(out). It carries out the reaction L-phenylalanine(in) + Na(+)(in) = L-phenylalanine(out) + Na(+)(out). Its function is as follows. Functions as a sodium-dependent neutral amino acid transporter. Exhibits preference for the branched-chain amino acids, particularly leucine, valine and isoleucine and methionine. Can also transport low-affinity substrates such as alanine, phenylalanine, glutamine and pipecolic acid. Mediates the saturable, pH-sensitive and electrogenic cotransport of proline and sodium ions with a stoichiometry of 1:1. May have a role as transporter for neurotransmitter precursors into neurons. In contrast to other members of the neurotransmitter transporter family, does not appear to be chloride-dependent. The polypeptide is Sodium-dependent neutral amino acid transporter B(0)AT2 (SLC6A15) (Bos taurus (Bovine)).